A 321-amino-acid polypeptide reads, in one-letter code: Lipoyl synthase (321 aa).

[4Fe-4S] cluster contacts are provided by cysteine 68, cysteine 73, cysteine 79, cysteine 94, cysteine 98, cysteine 101, and serine 308. The 218-residue stretch at 80 to 297 (FNHGTATFMI…KAEAMAMGFT (218 aa)) folds into the Radical SAM core domain.

It belongs to the radical SAM superfamily. Lipoyl synthase family. Requires [4Fe-4S] cluster as cofactor.

The protein localises to the cytoplasm. The catalysed reaction is [[Fe-S] cluster scaffold protein carrying a second [4Fe-4S](2+) cluster] + N(6)-octanoyl-L-lysyl-[protein] + 2 oxidized [2Fe-2S]-[ferredoxin] + 2 S-adenosyl-L-methionine + 4 H(+) = [[Fe-S] cluster scaffold protein] + N(6)-[(R)-dihydrolipoyl]-L-lysyl-[protein] + 4 Fe(3+) + 2 hydrogen sulfide + 2 5'-deoxyadenosine + 2 L-methionine + 2 reduced [2Fe-2S]-[ferredoxin]. The protein operates within protein modification; protein lipoylation via endogenous pathway; protein N(6)-(lipoyl)lysine from octanoyl-[acyl-carrier-protein]: step 2/2. In terms of biological role, catalyzes the radical-mediated insertion of two sulfur atoms into the C-6 and C-8 positions of the octanoyl moiety bound to the lipoyl domains of lipoate-dependent enzymes, thereby converting the octanoylated domains into lipoylated derivatives. This Cronobacter sakazakii (strain ATCC BAA-894) (Enterobacter sakazakii) protein is Lipoyl synthase.